A 172-amino-acid chain; its full sequence is Myosin regulatory light polypeptide 9 (172 aa).

A compositionally biased stretch (basic residues) spans 1-16; that stretch reads MSSKRAKAKTTKKRPQ. A disordered region spans residues 1–20; the sequence is MSSKRAKAKTTKKRPQRATS. Ser-2 is subject to N-acetylserine. Thr-19 is subject to Phosphothreonine; by MLCK, CIT and ROCK2. At Ser-20 the chain carries Phosphoserine; by CDC42BP, CIT, MLCK, PAK1, ROCK1, ROCK2, DAPK1, DAPK2 and ZIPK/DAPK3. EF-hand domains follow at residues 29-64, 98-133, and 134-169; these read SQIQ…LGKN, DPED…MGDR, and FTDE…GAKD. 4 residues coordinate Ca(2+): Asp-42, Asn-44, Asp-46, and Asp-53.

Myosin is a hexamer of 2 heavy chains and 4 light chains: interacts with myosin heavy chain MYO19. Interacts with LUZP1; the interaction results in inhibition of phosphorylation of MYL9 by DAPK3. Post-translationally, phosphorylation increases the actin-activated myosin ATPase activity and thereby regulates the contractile activity. It is required to generate the driving force in the migration of the cells but not necessary for localization of myosin-2 at the leading edge. Phosphorylation is required for myotube formation. Phosphorylated by DAPK3; DAPK3-mediated phosphorylation is inhibited by LUZP1. In terms of tissue distribution, smooth muscle tissues and in some, but not all, nonmuscle cells.

The protein resides in the cytoplasm. Its subcellular location is the cytoskeleton. It is found in the cell cortex. Functionally, myosin regulatory subunit that plays an important role in regulation of both smooth muscle and nonmuscle cell contractile activity via its phosphorylation. Implicated in cytokinesis, receptor capping, and cell locomotion. In myoblasts, may regulate PIEZO1-dependent cortical actomyosin assembly involved in myotube formation. This is Myosin regulatory light polypeptide 9 (MYL9) from Homo sapiens (Human).